The chain runs to 30 residues: V-type proton ATPase catalytic subunit A isoform 1 (30 aa).

Belongs to the ATPase alpha/beta chains family. As to quaternary structure, V-ATPase is a heteromultimeric enzyme composed of a peripheral catalytic V1 complex (main components: subunits A, B, C, D, E, and F) attached to an integral membrane V0 proton pore complex (main component: the proteolipid protein).

It catalyses the reaction ATP + H2O + 4 H(+)(in) = ADP + phosphate + 5 H(+)(out). Catalytic subunit of the peripheral V1 complex of vacuolar ATPase. V-ATPase vacuolar ATPase is responsible for acidifying a variety of intracellular compartments in eukaryotic cells. This chain is V-type proton ATPase catalytic subunit A isoform 1, found in Equisetum arvense (Field horsetail).